A 247-amino-acid polypeptide reads, in one-letter code: Segregation and condensation protein A (247 aa).

This sequence belongs to the ScpA family. In terms of assembly, component of a cohesin-like complex composed of ScpA, ScpB and the Smc homodimer, in which ScpA and ScpB bind to the head domain of Smc. The presence of the three proteins is required for the association of the complex with DNA.

The protein resides in the cytoplasm. Functionally, participates in chromosomal partition during cell division. May act via the formation of a condensin-like complex containing Smc and ScpB that pull DNA away from mid-cell into both cell halves. This is Segregation and condensation protein A from Lactobacillus johnsonii (strain CNCM I-12250 / La1 / NCC 533).